Here is a 552-residue protein sequence, read N- to C-terminus: Arginine--tRNA ligase (552 aa).

Residues 130–140 (ANPTGPIHLGG) carry the 'HIGH' region motif.

This sequence belongs to the class-I aminoacyl-tRNA synthetase family. In terms of assembly, monomer.

The protein localises to the cytoplasm. The enzyme catalyses tRNA(Arg) + L-arginine + ATP = L-arginyl-tRNA(Arg) + AMP + diphosphate. This chain is Arginine--tRNA ligase, found in Nocardia farcinica (strain IFM 10152).